Consider the following 323-residue polypeptide: Ribonuclease Z (323 aa).

Residues His62, His64, Asp66, His67, His140, Asp211, and His270 each coordinate Zn(2+). The active-site Proton acceptor is the Asp66.

Belongs to the RNase Z family. Homodimer. Zn(2+) is required as a cofactor.

It carries out the reaction Endonucleolytic cleavage of RNA, removing extra 3' nucleotides from tRNA precursor, generating 3' termini of tRNAs. A 3'-hydroxy group is left at the tRNA terminus and a 5'-phosphoryl group is left at the trailer molecule.. Its function is as follows. Zinc phosphodiesterase, which displays some tRNA 3'-processing endonuclease activity. Probably involved in tRNA maturation, by removing a 3'-trailer from precursor tRNA. In Marinobacter nauticus (strain ATCC 700491 / DSM 11845 / VT8) (Marinobacter aquaeolei), this protein is Ribonuclease Z.